Consider the following 87-residue polypeptide: Protein ORF3 (87 aa).

The interval 58 to 87 (GALNNAPREPSAPPLSQTLSPRQVLARYQM) is disordered. The PTAP/PSAP motif motif lies at 67-70 (PSAP).

This sequence belongs to the hepevirus ORF3 protein family. Post-translationally, palmitoylated in the N-terminus.

The protein localises to the host endoplasmic reticulum membrane. It is found in the host cytoplasm. Its subcellular location is the host cytoskeleton. The protein resides in the virion. It localises to the host cell membrane. In terms of biological role, small multifunctional phosphoprotein involved in virion morphogenesis, egress and counteracting host innate immunity. This chain is Protein ORF3, found in Avian hepatitis E virus (isolate Chicken/California/Meng) (AHEV).